We begin with the raw amino-acid sequence, 114 residues long: Beta-microseminoprotein J1 (114 aa).

Residues 1–20 form the signal peptide; the sequence is MNVLLGGLVIFATFVTLCNA. Disulfide bonds link cysteine 22/cysteine 70, cysteine 38/cysteine 62, cysteine 57/cysteine 93, cysteine 60/cysteine 69, and cysteine 84/cysteine 107.

Belongs to the beta-microseminoprotein family.

It localises to the secreted. The polypeptide is Beta-microseminoprotein J1 (MSPJ) (Saguinus oedipus (Cotton-top tamarin)).